The primary structure comprises 542 residues: Probable quinate permease (542 aa).

Residues 1–22 (MSILALVEDRPTPKEVYNWKIY) are Cytoplasmic-facing. Residues 23–43 (LLAAVASFTSCMIGYDSAFIG) form a helical membrane-spanning segment. Topologically, residues 44–74 (TTLALSSFREEFGFSTMSKTAVNLVSANIVS) are extracellular. The chain crosses the membrane as a helical span at residues 75–95 (CYQAGAFFGAFFAYPIGHFWG). Over 96–97 (RK) the chain is Cytoplasmic. A helical membrane pass occupies residues 98–118 (WGLLFAGTIFTLGAGLMLGAN). The Extracellular portion of the chain corresponds to 119-130 (GDRGLGLLYGGR). A helical membrane pass occupies residues 131–151 (VLAGLGVGAGSNITPIYISEM). The Cytoplasmic segment spans residues 152-159 (APPSIRGR). A helical membrane pass occupies residues 160-180 (LVGVYELGWQIGGLVGFWINY). Topologically, residues 181 to 193 (GVSETLAPSHKQW) are extracellular. The helical transmembrane segment at 194–214 (IIPFAVQLIPSGLLLIGAVFL) threads the bilayer. At 215-285 (KESPRWLFSR…AGTNKKVMYR (71 aa)) the chain is on the cytoplasmic side. The chain crosses the membrane as a helical span at residues 286–306 (LFLGSMLFFWQNGSGINAINY). The Extracellular portion of the chain corresponds to 307-325 (YSPTVFKSIGLHGANTSMF). Residues 326-346 (STGIFGVVKTVVTFVWLLYLI) form a helical membrane-spanning segment. The Cytoplasmic segment spans residues 347-352 (DRLGRR). Residues 353–373 (LLLLIGAAGAAVCLLIVGAYI) form a helical membrane-spanning segment. The Extracellular segment spans residues 374-387 (KIADPASNPTQEMT). A helical membrane pass occupies residues 388–408 (GGGIAAMFFFYLYTVFYTPSW). Over 409 to 456 (NGTPWVMNSEMFEPNMRSLAQACAAASNWLWNFLISRFTPQMFAKMEY) the chain is Cytoplasmic. A helical transmembrane segment spans residues 457–477 (GVWFFFASLMLLSIVFVFFLV). The Extracellular portion of the chain corresponds to 478–542 (PETKGIPLES…EHVSEDLPKV (65 aa)). The tract at residues 523-542 (GYSKTGEQQVEHVSEDLPKV) is disordered. A compositionally biased stretch (basic and acidic residues) spans 531-542 (QVEHVSEDLPKV).

This sequence belongs to the major facilitator superfamily. Sugar transporter (TC 2.A.1.1) family. Interacts with creB. In terms of processing, ubiquitinated. Deubiquitinated by creB, probably to control its activity or amount.

Its subcellular location is the cell membrane. Integral membrane transporter that imports quinic acid to be catabolized as a carbon source. This chain is Probable quinate permease (qutD), found in Aspergillus fumigatus (strain CBS 144.89 / FGSC A1163 / CEA10) (Neosartorya fumigata).